A 347-amino-acid chain; its full sequence is GMP reductase (347 aa).

108 to 131 (TDFEKTKQILIANPALNFLCIDVA) is a binding site for NADP(+). G181 and G183 together coordinate K(+). C186 serves as the catalytic Thioimidate intermediate. 216 to 239 (IISDGGCTMPGDVAKAFGGGADFV) contacts NADP(+).

It belongs to the IMPDH/GMPR family. GuaC type 1 subfamily. As to quaternary structure, homotetramer.

It catalyses the reaction IMP + NH4(+) + NADP(+) = GMP + NADPH + 2 H(+). Catalyzes the irreversible NADPH-dependent deamination of GMP to IMP. It functions in the conversion of nucleobase, nucleoside and nucleotide derivatives of G to A nucleotides, and in maintaining the intracellular balance of A and G nucleotides. The chain is GMP reductase from Enterobacter sp. (strain 638).